The primary structure comprises 896 residues: MPQKTKDTPMMRQYFAVKNQYPDAFLFYRLGDFYEMFFDDAIKGAQLLELTLTTRNHSAENPIPMCGVPHRAVQNYIDILVDKGYKVAICEQMEDPKLAKGMVKREVIQLVTPGTTLERGAEQAKTNNYLTALIQRDQQYGFAYADLSTGELKTSVLTTNDTLINELTSLQTKEIVVDDSVASDLRDQIKTLGILISEQNNVTPQAQLSYLTQDLTVDLEQQVVERLLMYITVTQKRSLAHLQKAIAYEPSYFLKLDHNSKYNLELMKSIRTGKKQGTLLWLLDETKTAMGGRLLKQWIDRPLIVKADIETRQNKVATLLDHYFERSNLQEELTKVYDLERLAGRVAFGSVNGRDLVQLKTSLRQIPKIRYILSELDTQVFNDEVNQLDPVEDVADLIDAAIVEDAPLSVTDGGVIKDGYNEQLDQYRDAMNNGKKWIAELEAQERATTGIKNLKIGFNRVFGYYIEVTKANLAQLPKDRYERKQTLTNAERFSTPELKSHESLILEAESHSTDLEYQLFTKVRETVKKAIQRLQTLAKAVAAIDVLQSFAVVSEDYHFVRPKLTKSHDLKIVDGRHPVVEKVMGNQSYVPNNVTMSPDETVLLITGPNMSGKSTYMRQLALTVIMAQIGCFVPAKSAQLPIFDQIFTRIGATDDLISGQSTFMVEMQEANNALQHATANSLVLFDEIGRGTATYDGMALAQAIIEFVHNHIHAKTLFSTHYHELTALDQELSGLRNVHVGATEQDGELVFLHKVEPGAADKSYGVHVAKLAGMPTSLLERANKILTSLENQTSTVSTTAASIAASDAANSVAPNTAASMPVEAADESQPVESETPVAEAPVAEAGDEQLSLFAEPAVTDAKGEKVLQQLKTLNLMAMTPMDVMNQLYKWQQKLGK.

607–614 (GPNMSGKS) is a binding site for ATP. The interval 809-835 (ANSVAPNTAASMPVEAADESQPVESET) is disordered.

This sequence belongs to the DNA mismatch repair MutS family.

In terms of biological role, this protein is involved in the repair of mismatches in DNA. It is possible that it carries out the mismatch recognition step. This protein has a weak ATPase activity. The chain is DNA mismatch repair protein MutS from Lactiplantibacillus plantarum (strain ATCC BAA-793 / NCIMB 8826 / WCFS1) (Lactobacillus plantarum).